We begin with the raw amino-acid sequence, 1006 residues long: Unconventional myosin-Id (1006 aa).

A2 carries the N-acetylalanine modification. The Myosin motor domain occupies 9 to 695 (FGKADFVLMD…TLFTLEELRA (687 aa)). 102 to 109 (GESGAGKT) lines the ATP pocket. S200 is subject to Phosphoserine. Y536 is subject to Phosphotyrosine. Positions 572–594 (MIALVDNLASKEPYYVRCIKPND) are actin-binding. IQ domains are found at residues 699–719 (IRIV…MRYK) and 721–741 (TKAA…SYIQ). One can recognise a TH1 domain in the interval 812–1005 (GQRADLGLQR…RSGFILSVPG (194 aa)).

This sequence belongs to the TRAFAC class myosin-kinesin ATPase superfamily. Myosin family. Interacts (via the two IQ motifs) with calmodulin. Binds an additional calmodulin chain via a third, C-terminal region. Interacts with F-actin.

The protein resides in the cytoplasm. It localises to the perikaryon. Its subcellular location is the cell projection. The protein localises to the dendrite. It is found in the early endosome. The protein resides in the cell cortex. In terms of biological role, unconventional myosin that functions as actin-based motor protein with ATPase activity. Plays a role in endosomal protein trafficking, and especially in the transfer of cargo proteins from early to recycling endosomes. Required for normal planar cell polarity in ciliated tracheal cells, for normal rotational polarity of cilia, and for coordinated, unidirectional ciliary movement in the trachea. Required for normal, polarized cilia organization in brain ependymal epithelial cells. This Canis lupus familiaris (Dog) protein is Unconventional myosin-Id (MYO1D).